A 256-amino-acid chain; its full sequence is MSSTAFTSSLSNWDLYPTNGSITPHLLLVGAQILFLSGPHFHGRRTLAATTILSLAAIAQYNRFTNNPGVANLFALAWPHWLSAVEKIVFASPEGPEADLWRVDRVPREAMSWPVFGWRKVKWAVTLLLNLRGIRWSFQVKNVPKMPERMTRGQFLRWRLGELVWVLLMTDLVSQMMLRFFFTDAAGALGNLDSKYITIRDARWGWSLLKALTFGLGPYFFINMQYLVVSILAVAMGISRPEVGSCPPRRSNRQPC.

A glycan (N-linked (GlcNAc...) asparagine) is linked at asparagine 19. The next 3 membrane-spanning stretches (helical) occupy residues 21–41 (SITP…GPHF), 163–183 (LVWV…FFFT), and 214–234 (FGLG…ILAV).

The protein resides in the membrane. The protein operates within mycotoxin biosynthesis. In terms of biological role, part of the gene cluster that mediates the biosynthesis of aspirochlorine (or antibiotic A30641), an unusual halogenated spiro compound with distinctive antifungal properties due to selective inhibition of protein biosynthesis, and which is also active against bacteria, viruses, and murine tumor cells. The non-ribosomal peptide synthetase (NRPS) aclP is responsible the formation of the diketopiperazine (DKP) core from the condensation of 2 phenylalanine residues. One Phe residue is tailored into chlorotyrosine by hydroxylation and chlorination, whereas the second Phe undergoes an unprecedented C-C bond cleavage to be converted into glycine. After formation of the DKP, sulfur is incorporated into the DKP by conjugation with glutathione by aclG, followed by its stepwise degradation to the thiol by aclI, aclJ and aclK, and the dithiol oxidation by aclT. In addition, oxygenases (aclB, aclC, aclL and aclO) and O-methyltransferases (aclM and aclU) act as tailoring enzymes to produce the intermediate dechloroaspirochlorine. Ultimately, chlorination of dechloroaspirochlorine by the halogenase aclH is the last step in the aspirochlorine pathway. The sequence is that of Aspirochlorine biosynthesis protein F from Aspergillus oryzae (strain ATCC 42149 / RIB 40) (Yellow koji mold).